A 203-amino-acid polypeptide reads, in one-letter code: Snake venom metalloproteinase adamalysin-2 (203 aa).

In terms of domain architecture, Peptidase M12B spans 7–203 (RYIELVVVAD…YKPQCILNKP (197 aa)). Positions 10 and 94 each coordinate Ca(2+). Disulfide bonds link Cys118–Cys198 and Cys158–Cys165. His143 serves as a coordination point for Zn(2+). Residue Glu144 is part of the active site. Residues His147 and His153 each contribute to the Zn(2+) site. Residues Cys198 and Asn201 each contribute to the Ca(2+) site.

This sequence belongs to the venom metalloproteinase (M12B) family. P-I subfamily. Monomer. Requires Zn(2+) as cofactor. Expressed by the venom gland.

The protein resides in the secreted. The enzyme catalyses Cleavage of 1-Phe-|-Val-2, 5-His-|-Leu-6, 14-Ala-|-Leu-15, 15-Leu-|-Tyr-16, and 16-Tyr-|-Leu-17 of insulin B chain.. Has no significant hemorrhagic activity, but inactivates serpins by limited proteolysis of their reactive-site loops. The polypeptide is Snake venom metalloproteinase adamalysin-2 (Crotalus adamanteus (Eastern diamondback rattlesnake)).